Reading from the N-terminus, the 318-residue chain is 4-hydroxy-3-methylbut-2-enyl diphosphate reductase (318 aa).

Residue Cys-12 participates in [4Fe-4S] cluster binding. Positions 41 and 74 each coordinate (2E)-4-hydroxy-3-methylbut-2-enyl diphosphate. Dimethylallyl diphosphate is bound by residues His-41 and His-74. Isopentenyl diphosphate-binding residues include His-41 and His-74. Cys-96 contributes to the [4Fe-4S] cluster binding site. Position 124 (His-124) interacts with (2E)-4-hydroxy-3-methylbut-2-enyl diphosphate. His-124 provides a ligand contact to dimethylallyl diphosphate. His-124 lines the isopentenyl diphosphate pocket. The active-site Proton donor is the Glu-126. Thr-167 contacts (2E)-4-hydroxy-3-methylbut-2-enyl diphosphate. Cys-197 is a binding site for [4Fe-4S] cluster. Residues Ser-225, Ser-226, Asn-227, and Ser-269 each contribute to the (2E)-4-hydroxy-3-methylbut-2-enyl diphosphate site. Residues Ser-225, Ser-226, Asn-227, and Ser-269 each contribute to the dimethylallyl diphosphate site. Ser-225, Ser-226, Asn-227, and Ser-269 together coordinate isopentenyl diphosphate.

It belongs to the IspH family. [4Fe-4S] cluster serves as cofactor.

The enzyme catalyses isopentenyl diphosphate + 2 oxidized [2Fe-2S]-[ferredoxin] + H2O = (2E)-4-hydroxy-3-methylbut-2-enyl diphosphate + 2 reduced [2Fe-2S]-[ferredoxin] + 2 H(+). It catalyses the reaction dimethylallyl diphosphate + 2 oxidized [2Fe-2S]-[ferredoxin] + H2O = (2E)-4-hydroxy-3-methylbut-2-enyl diphosphate + 2 reduced [2Fe-2S]-[ferredoxin] + 2 H(+). It participates in isoprenoid biosynthesis; dimethylallyl diphosphate biosynthesis; dimethylallyl diphosphate from (2E)-4-hydroxy-3-methylbutenyl diphosphate: step 1/1. It functions in the pathway isoprenoid biosynthesis; isopentenyl diphosphate biosynthesis via DXP pathway; isopentenyl diphosphate from 1-deoxy-D-xylulose 5-phosphate: step 6/6. Functionally, catalyzes the conversion of 1-hydroxy-2-methyl-2-(E)-butenyl 4-diphosphate (HMBPP) into a mixture of isopentenyl diphosphate (IPP) and dimethylallyl diphosphate (DMAPP). Acts in the terminal step of the DOXP/MEP pathway for isoprenoid precursor biosynthesis. The protein is 4-hydroxy-3-methylbut-2-enyl diphosphate reductase of Francisella tularensis subsp. mediasiatica (strain FSC147).